The primary structure comprises 430 residues: Phosphomethylpyrimidine synthase (430 aa).

Substrate contacts are provided by residues asparagine 67, methionine 96, tyrosine 125, histidine 161, 183 to 185 (SRG), 224 to 227 (DALR), and glutamate 263. Histidine 267 serves as a coordination point for Zn(2+). Tyrosine 290 is a substrate binding site. Histidine 331 serves as a coordination point for Zn(2+). Residues cysteine 406, cysteine 409, and cysteine 413 each coordinate [4Fe-4S] cluster.

Belongs to the ThiC family. Homodimer. It depends on [4Fe-4S] cluster as a cofactor.

It catalyses the reaction 5-amino-1-(5-phospho-beta-D-ribosyl)imidazole + S-adenosyl-L-methionine = 4-amino-2-methyl-5-(phosphooxymethyl)pyrimidine + CO + 5'-deoxyadenosine + formate + L-methionine + 3 H(+). It functions in the pathway cofactor biosynthesis; thiamine diphosphate biosynthesis. In terms of biological role, catalyzes the synthesis of the hydroxymethylpyrimidine phosphate (HMP-P) moiety of thiamine from aminoimidazole ribotide (AIR) in a radical S-adenosyl-L-methionine (SAM)-dependent reaction. In Campylobacter jejuni subsp. jejuni serotype O:23/36 (strain 81-176), this protein is Phosphomethylpyrimidine synthase.